A 202-amino-acid polypeptide reads, in one-letter code: MQTSLVIEALMESLRHLPGVGPKSAQRMAFYLLQSDRSKGIRLAESLLKAMSEIGHCGVCRTFTEQPCCDICSNVYREKMGQICVVESPSDICAIEQTGQFSGRYFVLMGRLSPLDGIGPDDIGLPLLEHRLSTEPIKEVILAMNPTVEGEATSNYIAQMCEEYGISTTKIAHGVPIGGDLEMVDETTLSHALVGRRPMNFN.

The C4-type zinc finger occupies cysteine 57–cysteine 72. Residues glycine 81–proline 176 enclose the Toprim domain.

This sequence belongs to the RecR family.

Its function is as follows. May play a role in DNA repair. It seems to be involved in an RecBC-independent recombinational process of DNA repair. It may act with RecF and RecO. The sequence is that of Recombination protein RecR from Hamiltonella defensa subsp. Acyrthosiphon pisum (strain 5AT).